The chain runs to 429 residues: Adenylosuccinate synthetase (429 aa).

GTP-binding positions include 12-18 and 40-42; these read GDEGKGK and GHT. D13 serves as the catalytic Proton acceptor. D13 and G40 together coordinate Mg(2+). IMP is bound by residues 13 to 16, 38 to 41, T130, R144, Q225, T240, and R304; these read DEGK and NAGH. The active-site Proton donor is H41. 300–306 serves as a coordination point for substrate; it reads ATTGRPR. GTP is bound by residues R306, 332–334, and 414–416; these read KLD and SVG.

Belongs to the adenylosuccinate synthetase family. In terms of assembly, homodimer. Mg(2+) serves as cofactor.

It localises to the cytoplasm. The enzyme catalyses IMP + L-aspartate + GTP = N(6)-(1,2-dicarboxyethyl)-AMP + GDP + phosphate + 2 H(+). It functions in the pathway purine metabolism; AMP biosynthesis via de novo pathway; AMP from IMP: step 1/2. In terms of biological role, plays an important role in the de novo pathway of purine nucleotide biosynthesis. Catalyzes the first committed step in the biosynthesis of AMP from IMP. The protein is Adenylosuccinate synthetase of Syntrophobacter fumaroxidans (strain DSM 10017 / MPOB).